The chain runs to 309 residues: Bifunctional methylenetetrahydrofolate dehydrogenase/cyclohydrolase, mitochondrial (309 aa).

Belongs to the tetrahydrofolate dehydrogenase/cyclohydrolase family. In terms of assembly, homodimer. Mg(2+) is required as a cofactor.

It is found in the mitochondrion. It catalyses the reaction (6R)-5,10-methylene-5,6,7,8-tetrahydrofolate + NAD(+) = (6R)-5,10-methenyltetrahydrofolate + NADH. The catalysed reaction is (6R)-5,10-methenyltetrahydrofolate + H2O = (6R)-10-formyltetrahydrofolate + H(+). Its function is as follows. May play a role in spermatogenesis. This Drosophila melanogaster (Fruit fly) protein is Bifunctional methylenetetrahydrofolate dehydrogenase/cyclohydrolase, mitochondrial (Nmdmc).